The chain runs to 83 residues: RNA-binding protein Hfq (83 aa).

Positions 11 to 71 (DTFLNHVRKN…ISTIMPGHPV (61 aa)) constitute a Sm domain.

This sequence belongs to the Hfq family. Homohexamer.

RNA chaperone that binds small regulatory RNA (sRNAs) and mRNAs to facilitate mRNA translational regulation in response to envelope stress, environmental stress and changes in metabolite concentrations. Also binds with high specificity to tRNAs. This is RNA-binding protein Hfq from Methylobacterium radiotolerans (strain ATCC 27329 / DSM 1819 / JCM 2831 / NBRC 15690 / NCIMB 10815 / 0-1).